The primary structure comprises 946 residues: Inter-alpha-trypsin inhibitor heavy chain H2 (946 aa).

An N-terminal signal peptide occupies residues 1–18 (MKRLTCFFICFFLSEVSG). Residues 19–54 (FEIPINGLSEFVDYEDLVELAPGKFQLVAENRRYQR) constitute a propeptide that is removed on maturation. Residues 56–185 (LPGESEEMME…KVQFELHYQE (130 aa)) enclose the VIT domain. Position 60 is a phosphoserine; by FAM20C (serine 60). N-linked (GlcNAc...) (complex) asparagine glycosylation is present at asparagine 118. Cysteine 261 and cysteine 264 are joined by a disulfide. A 4-carboxyglutamate mark is found at glutamate 282 and glutamate 283. Residues 308-468 (PKNILFVIDV…YDFLKRLSNE (161 aa)) form the VWFA domain. The N-linked (GlcNAc...) asparagine glycan is linked to asparagine 445. Residue serine 466 is modified to Phosphoserine; by FAM20C. An intrachain disulfide couples cysteine 650 to cysteine 651. The interval 665–679 (STPSWANPSPTPVIS) is O-glycosylated at three sites. O-linked (GalNAc...) threonine; partial glycosylation occurs at threonine 666. Serine 673 carries an O-linked (GalNAc...) serine glycan. 2 O-linked (GalNAc...) threonine glycosylation sites follow: threonine 675 and threonine 691. Aspartate 702 carries the aspartate 1-(chondroitin 4-sulfate)-ester modification. Positions 703 to 946 (PHFIIYLPKS…PQLYSFLKRP (244 aa)) are excised as a propeptide. Serine 886 carries the post-translational modification Phosphoserine; by FAM20C.

I-alpha-I plasma protease inhibitors are assembled from one or two heavy chains (HC) and one light chain, bikunin. Inter-alpha-inhibitor (I-alpha-I) is composed of ITIH1/HC1, ITIH2/HC2 and bikunin. Post-translationally, heavy chains are linked to bikunin via chondroitin 4-sulfate esterified to the alpha-carboxyl of the C-terminal aspartate after propeptide cleavage. N- and O-glycosylated. O-glycosylated with core 1 or possibly core 8 glycans. In terms of processing, phosphorylated by FAM20C in the extracellular medium. As to expression, plasma.

The protein localises to the secreted. May act as a carrier of hyaluronan in serum or as a binding protein between hyaluronan and other matrix protein, including those on cell surfaces in tissues to regulate the localization, synthesis and degradation of hyaluronan which are essential to cells undergoing biological processes. The chain is Inter-alpha-trypsin inhibitor heavy chain H2 (ITIH2) from Homo sapiens (Human).